Here is a 232-residue protein sequence, read N- to C-terminus: Orotidine 5'-phosphate decarboxylase (232 aa).

Residues aspartate 11, lysine 33, 60 to 69, threonine 120, arginine 181, glutamine 190, glycine 210, and arginine 211 each bind substrate; that span reads DLKFHDIPNT. Residue lysine 62 is the Proton donor of the active site.

This sequence belongs to the OMP decarboxylase family. Type 1 subfamily. As to quaternary structure, homodimer.

The enzyme catalyses orotidine 5'-phosphate + H(+) = UMP + CO2. The protein operates within pyrimidine metabolism; UMP biosynthesis via de novo pathway; UMP from orotate: step 2/2. Functionally, catalyzes the decarboxylation of orotidine 5'-monophosphate (OMP) to uridine 5'-monophosphate (UMP). In Vibrio vulnificus (strain CMCP6), this protein is Orotidine 5'-phosphate decarboxylase.